Consider the following 146-residue polypeptide: MLLQGTHRIGRMAMLLALADENESPVLSIPKGWKYCTGKVGSMNSQKVVAAMETAAKSNQVIETDVYRETHALYHAIMEALYGVTRGQIQLADVLRTVGLRFAIVRGTPYDGKKEGEWVAVALYGTIGAPVKGSEHEAIGLGINHI.

It belongs to the HutP family. In terms of assembly, homohexamer.

Functionally, antiterminator that binds to cis-acting regulatory sequences on the mRNA in the presence of histidine, thereby suppressing transcription termination and activating the hut operon for histidine utilization. This is Hut operon positive regulatory protein from Bacillus anthracis (strain CDC 684 / NRRL 3495).